Consider the following 177-residue polypeptide: Acireductone dioxygenase (177 aa).

Fe(2+) contacts are provided by H97, H99, E103, and H141. Residues H97, H99, E103, and H141 each coordinate Ni(2+).

The protein belongs to the acireductone dioxygenase (ARD) family. Monomer. Requires Fe(2+) as cofactor. Ni(2+) serves as cofactor.

It catalyses the reaction 1,2-dihydroxy-5-(methylsulfanyl)pent-1-en-3-one + O2 = 3-(methylsulfanyl)propanoate + CO + formate + 2 H(+). The catalysed reaction is 1,2-dihydroxy-5-(methylsulfanyl)pent-1-en-3-one + O2 = 4-methylsulfanyl-2-oxobutanoate + formate + 2 H(+). Its pathway is amino-acid biosynthesis; L-methionine biosynthesis via salvage pathway; L-methionine from S-methyl-5-thio-alpha-D-ribose 1-phosphate: step 5/6. Catalyzes 2 different reactions between oxygen and the acireductone 1,2-dihydroxy-3-keto-5-methylthiopentene (DHK-MTPene) depending upon the metal bound in the active site. Fe-containing acireductone dioxygenase (Fe-ARD) produces formate and 2-keto-4-methylthiobutyrate (KMTB), the alpha-ketoacid precursor of methionine in the methionine recycle pathway. Ni-containing acireductone dioxygenase (Ni-ARD) produces methylthiopropionate, carbon monoxide and formate, and does not lie on the methionine recycle pathway. This Leptospira biflexa serovar Patoc (strain Patoc 1 / ATCC 23582 / Paris) protein is Acireductone dioxygenase.